Reading from the N-terminus, the 2123-residue chain is Toxin Afp18 (2123 aa).

Positions 864-919 (FFDNSDQDADQPRVRRKREMTDEIMLSDGSSRSEAKALPDENELDTDQSKSRPESA) are disordered. The tyrosine glycosyltransferase stretch occupies residues 1771–2123 (VFDSANTNRS…GNSTQSSGLS (353 aa)). UDP-N-acetyl-alpha-D-glucosamine is bound by residues 1850 to 1852 (IWV) and 1940 to 1941 (SD). A divalent metal cation contacts are provided by Asp-1957 and Asp-1959. Positions 1957–1960 (DIDD) match the DxDD motif motif. Position 1993 (Asn-1993) interacts with UDP-N-acetyl-alpha-D-glucosamine.

Requires a divalent metal cation as cofactor.

It is found in the secreted. It localises to the host cell membrane. It carries out the reaction L-tyrosyl-[protein] + UDP-N-acetyl-alpha-D-glucosamine = O-(N-acetyl-alpha-D-glucosaminyl)-L-tyrosyl-[protein] + UDP + H(+). Its function is as follows. Toxin component of the prophage tail-derived protein translocation system Afp, which is the causative agent of enteric redmouth disease in salmonid fish species. Mono-O-GlcNAcylates the small GTPase RhoA in eukaryotic host cells at Tyr-34, using UDP-N-acetylglucosamine (UDP-GlcNAc) as the sugar donor. Glycosylation of RhoA results in impaired effector and regulator interaction and inactivation of downstream RhoA signaling which leads to actin filament depolymerization and blocks cytokinesis and gastrulation during zebrafish embryo development. To a lesser extent, is also able to glycosylate other Rho family GTPases (RhoB, RhoC, Rac1, Rac2, Rac3, and Cdc42) in vitro at a switch I tyrosine residue, but not Ras proteins. The chain is Toxin Afp18 from Yersinia ruckeri serotype O1 (strain ATCC 29473 / DSM 18506 / JCM 15110 / CCUG 14190 / NCIMB 2194 / NCTC 12986 / 2396-61).